A 219-amino-acid polypeptide reads, in one-letter code: Cytidylate kinase (219 aa).

15 to 23 (GPAASGKGT) contributes to the ATP binding site.

The protein belongs to the cytidylate kinase family. Type 1 subfamily.

The protein localises to the cytoplasm. The catalysed reaction is CMP + ATP = CDP + ADP. The enzyme catalyses dCMP + ATP = dCDP + ADP. The sequence is that of Cytidylate kinase from Brucella abortus (strain S19).